The chain runs to 325 residues: MKTVTINKGMYFGKEISGTFELLGEWFPDNAPVDAQGDGKVFVEIDGKRRGVWVYKSDISYDGVKVEEVKESYEDMKTRINKRFNVMGMMTNGIINGNIRSLIISGAAGIGKTYSLDKALNKANDIGYIEYKSINGKISGIGLYEQLWNNREENSVLLIDDVDVFSDMDILNLLKAALDTGETRKVCWSTASSYLEEKGIERELEFKGTIVFITNVDIDRELDRGTKLAPHLQALVSRSVYLDLGVHTNEEIMVRVEDVILSTDMMQKRGLSDEETYKALSWMKVNVNRLRNVSLRTALYLADFIMTDKNGWEEIATGYSSEINS.

This is an uncharacterized protein from Escherichia coli (Bacteriophage T4).